The chain runs to 397 residues: Argininosuccinate synthase (397 aa).

Ala-8 to Ser-16 provides a ligand contact to ATP. L-citrulline contacts are provided by Tyr-86 and Ser-91. Gly-116 lines the ATP pocket. Residues Thr-118, Asn-122, and Asp-123 each contribute to the L-aspartate site. Asn-122 contributes to the L-citrulline binding site. L-citrulline contacts are provided by Arg-126, Ser-175, Ser-184, Glu-260, and Tyr-272.

Belongs to the argininosuccinate synthase family. Type 1 subfamily. In terms of assembly, homotetramer.

The protein resides in the cytoplasm. The catalysed reaction is L-citrulline + L-aspartate + ATP = 2-(N(omega)-L-arginino)succinate + AMP + diphosphate + H(+). The protein operates within amino-acid biosynthesis; L-arginine biosynthesis; L-arginine from L-ornithine and carbamoyl phosphate: step 2/3. In Clostridium botulinum (strain 657 / Type Ba4), this protein is Argininosuccinate synthase.